Consider the following 128-residue polypeptide: Small ribosomal subunit protein uS14m (128 aa).

The protein belongs to the universal ribosomal protein uS14 family. Component of the mitochondrial small ribosomal subunit (mt-SSU). Mature mammalian 55S mitochondrial ribosomes consist of a small (28S) and a large (39S) subunit. The 28S small subunit contains a 12S ribosomal RNA (12S mt-rRNA) and 30 different proteins. The 39S large subunit contains a 16S rRNA (16S mt-rRNA), a copy of mitochondrial valine transfer RNA (mt-tRNA(Val)), which plays an integral structural role, and 52 different proteins. Interacts with LIAT1.

The protein localises to the mitochondrion. The protein is Small ribosomal subunit protein uS14m of Homo sapiens (Human).